A 531-amino-acid polypeptide reads, in one-letter code: 2,3-bisphosphoglycerate-independent phosphoglycerate mutase (531 aa).

The Mn(2+) site is built by Asp15 and Ser65. Residue Ser65 is the Phosphoserine intermediate of the active site. Residues His126, 155-156 (RD), Arg187, Arg193, 257-260 (RPDR), and Lys330 contribute to the substrate site. Mn(2+)-binding residues include Asp397, His401, Asp438, His439, and His456.

The protein belongs to the BPG-independent phosphoglycerate mutase family. In terms of assembly, monomer. Mn(2+) serves as cofactor.

The catalysed reaction is (2R)-2-phosphoglycerate = (2R)-3-phosphoglycerate. It functions in the pathway carbohydrate degradation; glycolysis; pyruvate from D-glyceraldehyde 3-phosphate: step 3/5. Its function is as follows. Catalyzes the interconversion of 2-phosphoglycerate and 3-phosphoglycerate. This is 2,3-bisphosphoglycerate-independent phosphoglycerate mutase from Thermosynechococcus vestitus (strain NIES-2133 / IAM M-273 / BP-1).